A 183-amino-acid chain; its full sequence is MKQFIEFIPLIVFFAVYKFYDIYTATGALVVVTGLQLIYSWVRYRKVEKMQLFTFLLVGFFGGLTVFFHDDAFIKWKVTVINILFALGLLISRYGFGKNLIKQMLAKELQAPDAIWDRVNLAWVGFFTVCGLLNLYVAFNLPQEMWVNFKVFGLLGMTLVFTLLSGVYLYRHLPAEQKGELKK.

The next 5 membrane-spanning stretches (helical) occupy residues 22-44, 54-74, 76-96, 119-139, and 149-169; these read IYTA…WVRY, TFLL…DAFI, WKVT…RYGF, VNLA…YVAF, and FKVF…GVYL.

The protein belongs to the YciB family.

Its subcellular location is the cell inner membrane. Its function is as follows. Plays a role in cell envelope biogenesis, maintenance of cell envelope integrity and membrane homeostasis. The chain is Inner membrane-spanning protein YciB from Aeromonas salmonicida (strain A449).